Here is a 168-residue protein sequence, read N- to C-terminus: Small ribosomal subunit protein uS5 (168 aa).

The S5 DRBM domain occupies 13 to 76 (LEENVVAINR…EDAKRKLITV (64 aa)).

It belongs to the universal ribosomal protein uS5 family. As to quaternary structure, part of the 30S ribosomal subunit. Contacts proteins S4 and S8.

With S4 and S12 plays an important role in translational accuracy. Its function is as follows. Located at the back of the 30S subunit body where it stabilizes the conformation of the head with respect to the body. The chain is Small ribosomal subunit protein uS5 from Leuconostoc mesenteroides subsp. mesenteroides (strain ATCC 8293 / DSM 20343 / BCRC 11652 / CCM 1803 / JCM 6124 / NCDO 523 / NBRC 100496 / NCIMB 8023 / NCTC 12954 / NRRL B-1118 / 37Y).